The following is a 555-amino-acid chain: Solute carrier family 22 member 2 (555 aa).

At 1–21 (MSTVDDILEHIGEFHLFQKQT) the chain is on the cytoplasmic side. Residues 22–42 (FFLLALLSGAFTPIYVGIVFL) form a helical membrane-spanning segment. The Extracellular portion of the chain corresponds to 43 to 150 (GFTPDHHCWS…LVCAHSWMLD (108 aa)). N-linked (GlcNAc...) asparagine glycosylation is present at Asn-71. The chain crosses the membrane as a helical span at residues 151–171 (LFQSVVNVGFFIGAMMIGYLA). The Cytoplasmic segment spans residues 172 to 177 (DRFGRK). The chain crosses the membrane as a helical span at residues 178 to 198 (FCLLVTILINAISGALMAISP). Residues 199–210 (NYAWMLVFRFLQ) are Extracellular-facing. The helical transmembrane segment at 211–231 (GLVSKAGWLIGYILITEFVGL) threads the bilayer. The Cytoplasmic segment spans residues 232-238 (GYRRMVG). A helical transmembrane segment spans residues 239-259 (ICYQIAFTVGLLILAGVAYVI). The Extracellular segment spans residues 260–263 (PNWR). A helical membrane pass occupies residues 264–284 (WLQFAVTLPNFCFLLYFWCIP). The Proline-rich sequence signature appears at 284–288 (PESPR). The Cytoplasmic segment spans residues 285–348 (ESPRWLISQN…VRTPQIRKHT (64 aa)). Residues 349–369 (LILMYNWFTSSVLYQGLIMHM) traverse the membrane as a helical segment. The Extracellular portion of the chain corresponds to 370 to 375 (GLAGDN). Residues 376–396 (IYLDFFYSALVEFPAAFIIIL) form a helical membrane-spanning segment. Topologically, residues 397–404 (TIDRVGRR) are cytoplasmic. The chain crosses the membrane as a helical span at residues 405 to 425 (YPWAVSNMVAGAACLASVFIP). Over 426–432 (DDLQWLK) the chain is Extracellular. The chain crosses the membrane as a helical span at residues 433–453 (ITIACLGRMGITMAYEMVCLV). At 454 to 464 (NAELYPTYIRN) the chain is on the cytoplasmic side. The helical transmembrane segment at 465–485 (LGVLVCSSMCDIGGIITPFLV) threads the bilayer. At 486–494 (YRLTDIWME) the chain is on the extracellular side. Residues 495–515 (FPLVVFAVVGLVAGALVLLLP) form a helical membrane-spanning segment. The Cytoplasmic segment spans residues 516 to 555 (ETKGKALPETIEDAENMQRPRKKKEKRIYLQVKQADRPLS).

The protein belongs to the major facilitator (TC 2.A.1) superfamily. Organic cation transporter (TC 2.A.1.19) family. Tyrosine phosphorylated. As to expression, expressed in the kidney, in the proximal tubules of cortex and of the outer medulla. In brain, highly expressed predominantly in regions located at the brain-cerebrospinal fluid border, in the leptomeninges, in the choroid plexus and in a layer boarding the third ventricle. In brain, also observed in the granular cell layer of the cerebellum and in the granular layer and pyramidal cells of the hippocampus in the CA1-CA3 regions. Expressed in tracheal and bronchial ciliated epithelium in the respiratory tract. Expression is greater in the kidney of male than of female.

The protein localises to the basolateral cell membrane. It is found in the basal cell membrane. The protein resides in the apical cell membrane. The catalysed reaction is (R)-noradrenaline(out) = (R)-noradrenaline(in). It carries out the reaction (R)-adrenaline(out) = (R)-adrenaline(in). It catalyses the reaction serotonin(out) = serotonin(in). The enzyme catalyses dopamine(out) = dopamine(in). The catalysed reaction is histamine(out) = histamine(in). It carries out the reaction thiamine(in) = thiamine(out). It catalyses the reaction creatinine(in) = creatinine(out). The enzyme catalyses 1-methylnicotinamide(out) = 1-methylnicotinamide(in). The catalysed reaction is guanidine(out) = guanidine(in). It carries out the reaction choline(out) = choline(in). It catalyses the reaction agmatine(out) = agmatine(in). The enzyme catalyses putrescine(out) = putrescine(in). The catalysed reaction is spermidine(in) = spermidine(out). It carries out the reaction tyramine(in) = tyramine(out). It catalyses the reaction L-histidyl-L-proline diketopiperazine(in) = L-histidyl-L-proline diketopiperazine(out). The enzyme catalyses (R)-salsolinol(in) = (R)-salsolinol(out). The catalysed reaction is N-methyl-(R)-salsolinol(in) = N-methyl-(R)-salsolinol(out). It carries out the reaction acetylcholine(in) = acetylcholine(out). It catalyses the reaction prostaglandin F2alpha(out) = prostaglandin F2alpha(in). The enzyme catalyses prostaglandin E2(out) = prostaglandin E2(in). Tyrosine phosphorylation of the transporter leads to activation of the transport activity. Inhibited by cGMP, most likely through a cGMP-binding protein that interacts with OCT2. Electrogenic voltage-dependent transporter that mediates the transport of a variety of organic cations such as endogenous bioactive amines, cationic drugs and xenobiotics. Functions as a Na(+)-independent, bidirectional uniporter. Cation cellular uptake or release is driven by the electrochemical potential, i.e. membrane potential and concentration gradient. However, may also engage electroneutral cation exchange when saturating concentrations of cation substrates are reached. Predominantly expressed at the basolateral membrane of hepatocytes and proximal tubules and involved in the uptake and disposition of cationic compounds by hepatic and renal clearance from the blood flow. Implicated in monoamine neurotransmitters uptake such as histamine, dopamine, adrenaline/epinephrine, noradrenaline/norepinephrine, serotonin and tyramine, thereby supporting a physiological role in the central nervous system by regulating interstitial concentrations of neurotransmitters. Also capable of transporting dopaminergic neuromodulators cyclo(his-pro), salsolinol and N-methyl-salsolinol, thereby involved in the maintenance of dopaminergic cell integrity in the central nervous system. Mediates the bidirectional transport of acetylcholine (ACh) at the apical membrane of ciliated cell in airway epithelium, thereby playing a role in luminal release of ACh from bronchial epithelium. Also transports guanidine and endogenous monoamines such as vitamin B1/thiamine, creatinine and N-1-methylnicotinamide (NMN). Mediates the uptake and efflux of quaternary ammonium compound choline. Mediates the bidirectional transport of polyamine agmatine and the uptake of polyamine putrescine. Able to transport non-amine endogenous compounds such as prostaglandin E2 (PGE2) and prostaglandin F2-alpha (PGF2-alpha). Also involved in the uptake of xenobiotic 4-(4-(dimethylamino)styryl)-N-methylpyridinium (ASP). May contribute to regulate the transport of organic compounds in testis across the blood-testis-barrier. This Rattus norvegicus (Rat) protein is Solute carrier family 22 member 2.